The following is a 180-amino-acid chain: KxDL motif-containing protein 1 (180 aa).

Composition is skewed to polar residues over residues 130–144 and 158–170; these read TSEQ…SPSI and QAPS…NGQI. The segment at 130–180 is disordered; that stretch reads TSEQSTESCDTSPSIISPAMSQDFEDLSQAPSDTPSVNGQILTDEELVHED.

This sequence belongs to the KXD1 family. In terms of assembly, associates with the BLOC-1 complex.

The protein localises to the lysosome membrane. In terms of biological role, as part of a BORC-like complex may play a role in lysosomes movement and localization at the cell periphery. Associated with the cytosolic face of lysosomes, this complex may couple lysosomes to microtubule plus-end-directed kinesin motor. May also be involved in the biogenesis of lysosome-related organelles such as melanosomes. The polypeptide is KxDL motif-containing protein 1 (kxd1) (Xenopus laevis (African clawed frog)).